Reading from the N-terminus, the 139-residue chain is D-ribose pyranase (139 aa).

Catalysis depends on His-20, which acts as the Proton donor. Substrate contacts are provided by residues Asp-28, His-106, and 128 to 130; that span reads YAN.

The protein belongs to the RbsD / FucU family. RbsD subfamily. In terms of assembly, homodecamer.

It localises to the cytoplasm. The enzyme catalyses beta-D-ribopyranose = beta-D-ribofuranose. Its pathway is carbohydrate metabolism; D-ribose degradation; D-ribose 5-phosphate from beta-D-ribopyranose: step 1/2. Catalyzes the interconversion of beta-pyran and beta-furan forms of D-ribose. In Proteus mirabilis (strain HI4320), this protein is D-ribose pyranase.